The chain runs to 60 residues: Large ribosomal subunit protein bL32 (60 aa).

Basic residues predominate over residues M1 to R16. The interval M1 to S28 is disordered.

The protein belongs to the bacterial ribosomal protein bL32 family.

The protein is Large ribosomal subunit protein bL32 of Solibacter usitatus (strain Ellin6076).